The chain runs to 318 residues: Protease HtpX homolog (318 aa).

Helical transmembrane passes span 1–21 (MLEA…VGRL), 35–55 (ILGL…GSAI), and 56–76 (AGLV…SRIV). Histidine 167 provides a ligand contact to Zn(2+). Residue glutamate 168 is part of the active site. Position 171 (histidine 171) interacts with Zn(2+). 2 helical membrane-spanning segments follow: residues 178-198 (LVMT…DPWL) and 209-229 (IAFL…LVAA). Position 235 (glutamate 235) interacts with Zn(2+).

The protein belongs to the peptidase M48B family. It depends on Zn(2+) as a cofactor.

It localises to the cell membrane. The sequence is that of Protease HtpX homolog from Methanopyrus kandleri (strain AV19 / DSM 6324 / JCM 9639 / NBRC 100938).